The chain runs to 227 residues: Isopentenyl-diphosphate Delta-isomerase 1 (227 aa).

Lys-36 lines the substrate pocket. Positions 40 and 51 each coordinate Mg(2+). The region spanning 49–199 (LLHRAFSVFL…EIKITPWFKI (151 aa)) is the Nudix hydrolase domain. Residues Arg-70 and Lys-74 each coordinate substrate. Residue Cys-86 is part of the active site. Residue Ser-87 participates in substrate binding. Mg(2+) contacts are provided by Glu-146 and Glu-148. Glu-148 is an active-site residue. Lys-176 bears the N6-acetyllysine mark. A Microbody targeting signal motif is present at residues 225 to 227 (YRM).

It belongs to the IPP isomerase type 1 family. Monomer. The cofactor is Mg(2+).

Its subcellular location is the peroxisome. The catalysed reaction is isopentenyl diphosphate = dimethylallyl diphosphate. It participates in isoprenoid biosynthesis; dimethylallyl diphosphate biosynthesis; dimethylallyl diphosphate from isopentenyl diphosphate: step 1/1. In terms of biological role, catalyzes the 1,3-allylic rearrangement of the homoallylic substrate isopentenyl (IPP) to its highly electrophilic allylic isomer, dimethylallyl diphosphate (DMAPP). The polypeptide is Isopentenyl-diphosphate Delta-isomerase 1 (IDI1) (Homo sapiens (Human)).